We begin with the raw amino-acid sequence, 260 residues long: Dehydrogenase/reductase SDR family member 11 (260 aa).

An N-terminal signal peptide occupies residues 1–30 (MARPGMERWRDRLALVTGASGGIGAAVARA). NADP(+) is bound by residues 18–23 (GASGGI), 43–44 (RT), Glu-49, 70–71 (DL), and Asn-97. The substrate site is built by Ser-151 and Tyr-166. Residues Tyr-166, Lys-170, 201 to 204 (VETQ), and Lys-208 contribute to the NADP(+) site. The active-site Proton acceptor is Tyr-166.

This sequence belongs to the short-chain dehydrogenases/reductases (SDR) family. In terms of assembly, homotetramer. As to expression, isoform 1: Ubiquitously expressed, with highest levels in testis, small intestine, colon, kidney, brain and heart. Isoform 3: Expressed in brain, heart and skeletal muscle.

The protein localises to the secreted. The enzyme catalyses a 3beta-hydroxysteroid + NADP(+) = a 3-oxosteroid + NADPH + H(+). It catalyses the reaction 17beta-estradiol + NAD(+) = estrone + NADH + H(+). The catalysed reaction is 17beta-estradiol + NADP(+) = estrone + NADPH + H(+). The protein operates within steroid biosynthesis; estrogen biosynthesis. Inhibited by flavonoids including apigenin, luteolin, genistein, kaempferol and quercetin and also by carbenoxolone, zearalenone, glycyrrhetinic, curcumin and flufenamic acid. Catalyzes the conversion of the 17-keto group of estrone, 4- and 5-androstenes and 5-alpha-androstanes into their 17-beta-hydroxyl metabolites and the conversion of the 3-keto group of 3-, 3,17- and 3,20- diketosteroids into their 3-hydroxyl metabolites. Exhibits reductive 3-beta-hydroxysteroid dehydrogenase activity toward 5-beta-androstanes, 5-beta-pregnanes, 4-pregnenes and bile acids. May also reduce endogenous and exogenous alpha-dicarbonyl compounds and xenobiotic alicyclic ketones. The polypeptide is Dehydrogenase/reductase SDR family member 11 (DHRS11) (Homo sapiens (Human)).